The primary structure comprises 38 residues: Photosystem II reaction center protein L (38 aa).

A helical transmembrane segment spans residues 17–37 (SLYWGLLLIFVLAVPFSNYFF).

Belongs to the PsbL family. In terms of assembly, PSII is composed of 1 copy each of membrane proteins PsbA, PsbB, PsbC, PsbD, PsbE, PsbF, PsbH, PsbI, PsbJ, PsbK, PsbL, PsbM, PsbT, PsbX, PsbY, PsbZ, Psb30/Ycf12, at least 3 peripheral proteins of the oxygen-evolving complex and a large number of cofactors. It forms dimeric complexes.

The protein resides in the plastid. It is found in the chloroplast thylakoid membrane. One of the components of the core complex of photosystem II (PSII). PSII is a light-driven water:plastoquinone oxidoreductase that uses light energy to abstract electrons from H(2)O, generating O(2) and a proton gradient subsequently used for ATP formation. It consists of a core antenna complex that captures photons, and an electron transfer chain that converts photonic excitation into a charge separation. This subunit is found at the monomer-monomer interface and is required for correct PSII assembly and/or dimerization. The chain is Photosystem II reaction center protein L from Cedrus deodara (Deodar cedar).